The following is a 348-amino-acid chain: Ferredoxin--NADP reductase (348 aa).

FAD-binding residues include threonine 26, glutamate 45, glutamine 53, tyrosine 58, alanine 98, phenylalanine 133, aspartate 299, and serine 340.

This sequence belongs to the ferredoxin--NADP reductase type 2 family. Homodimer. The cofactor is FAD.

It catalyses the reaction 2 reduced [2Fe-2S]-[ferredoxin] + NADP(+) + H(+) = 2 oxidized [2Fe-2S]-[ferredoxin] + NADPH. This Prosthecochloris aestuarii (strain DSM 271 / SK 413) protein is Ferredoxin--NADP reductase.